We begin with the raw amino-acid sequence, 356 residues long: Heparan sulfate 2-O-sulfotransferase 1 (356 aa).

The Cytoplasmic segment spans residues 1 to 11 (MGLLRIMMPPK). The chain crosses the membrane as a helical; Signal-anchor for type II membrane protein span at residues 12-28 (LQLLAVVAFAVAMLFLE). A coiled-coil region spans residues 24–51 (MLFLENQIQKLEESRAKLERAIARHEVR). Residues 29-356 (NQIQKLEESR…FYEKIYPKSN (328 aa)) lie on the Lumenal side of the membrane. Residues Lys83, Thr84, Ala85, Ser86, Thr87, and Ser88 each coordinate adenosine 3',5'-bisphosphate. Asn108 and Asn127 each carry an N-linked (GlcNAc...) asparagine glycan. Active-site residues include His140 and His142. Residues Arg164 and Ser172 each contribute to the adenosine 3',5'-bisphosphate site. Disulfide bonds link Cys201–Cys209 and Cys222–Cys228. Residues Tyr279, Ser285, Thr290, and Lys293 each coordinate adenosine 3',5'-bisphosphate.

Belongs to the sulfotransferase 3 family. Homotrimer. Interacts with the C5-epimerase GLCE. In terms of processing, N-glycosylated.

The protein localises to the golgi apparatus membrane. In terms of biological role, catalyzes the transfer of a sulfo group from 3'-phospho-5'-adenylyl sulfate (PAPS) to the 2-OH position of iduronic acid (IdoA) or glucuronic acid (GlcA) within the heparan sulfate (HS) chain and participates in HS biosynthesis. Required for metanephric development of kidney formation, suggesting that 2-O-sulfation within HS is essential for signaling between ureteric bud and metanephric mesenchyme. This chain is Heparan sulfate 2-O-sulfotransferase 1, found in Cricetulus griseus (Chinese hamster).